Consider the following 98-residue polypeptide: NADH-ubiquinone oxidoreductase chain 4L (98 aa).

The next 3 helical transmembrane spans lie at 1 to 21 (MTPLNINLTMAFFLALAGVLI), 28 to 48 (STLLCLEGMMLSLFILLSLLI), and 59 to 79 (APLILLVFSACEAGVGLALLV).

This sequence belongs to the complex I subunit 4L family. As to quaternary structure, core subunit of respiratory chain NADH dehydrogenase (Complex I) which is composed of 45 different subunits.

It is found in the mitochondrion inner membrane. It carries out the reaction a ubiquinone + NADH + 5 H(+)(in) = a ubiquinol + NAD(+) + 4 H(+)(out). Core subunit of the mitochondrial membrane respiratory chain NADH dehydrogenase (Complex I) which catalyzes electron transfer from NADH through the respiratory chain, using ubiquinone as an electron acceptor. Part of the enzyme membrane arm which is embedded in the lipid bilayer and involved in proton translocation. In Tarsipes rostratus (Honey possum), this protein is NADH-ubiquinone oxidoreductase chain 4L (MT-ND4L).